The chain runs to 347 residues: Heat-inducible transcription repressor HrcA (347 aa).

It belongs to the HrcA family.

Functionally, negative regulator of class I heat shock genes (grpE-dnaK-dnaJ and groELS operons). Prevents heat-shock induction of these operons. This chain is Heat-inducible transcription repressor HrcA, found in Mycoplasmopsis pulmonis (strain UAB CTIP) (Mycoplasma pulmonis).